Reading from the N-terminus, the 721-residue chain is Sodium/hydrogen exchanger 6 (721 aa).

Residues 1 to 44 are disordered; sequence MTSPKPWARSAGSCQTQRAVRTRKKECREEGESDTEKGPAASSA. Residues 26–37 show a composition bias toward basic and acidic residues; that stretch reads ECREEGESDTEK. 12 helical membrane-spanning segments follow: residues 91–111, 123–143, 196–216, 231–251, 272–292, 298–318, 344–364, 388–412, 434–454, 456–476, 499–519, and 535–555; these read SANL…IWLF, GLAM…IHVP, VTFD…FYAG, ILAY…SIMY, CLLF…AIFH, VELY…AIVL, IGIF…TGVV, MSWS…FCGI, FELL…LTLF, FQNH…IFLG, NFQH…ALAI, and LLIV…MLSC.

It belongs to the monovalent cation:proton antiporter 1 (CPA1) transporter (TC 2.A.36) family. Homodimer. Interacts with RACK1; regulates the distribution of SLC9A6 between endosomes and the plasma membrane. Ubiquitinated (in vitro). Post-translationally, glycosylated.

The protein resides in the endosome membrane. Its subcellular location is the recycling endosome membrane. The protein localises to the early endosome membrane. It localises to the late endosome membrane. It is found in the cell membrane. The enzyme catalyses Na(+)(in) + H(+)(out) = Na(+)(out) + H(+)(in). It catalyses the reaction K(+)(in) + H(+)(out) = K(+)(out) + H(+)(in). Its function is as follows. Endosomal Na(+), K(+)/H(+) antiporter. Mediates the electroneutral exchange of endosomal luminal H(+) for a cytosolic Na(+) or K(+). By facilitating proton efflux, SLC9A6 counteracts the acidity generated by vacuolar (V)-ATPase, thereby limiting luminal acidification. Responsible for alkalizing and maintaining the endosomal pH, and consequently in, e.g., endosome maturation and trafficking of recycling endosomal cargo. Plays a critical role during neurodevelopment by regulating synaptic development and plasticity. Implicated in the maintenance of cell polarity in a manner that is dependent on its ability to modulate intravesicular pH. Regulates intracelular pH in some specialized cells, osteoclasts and stereocilia where this transporter localizes to the plasma membrane. This Rattus norvegicus (Rat) protein is Sodium/hydrogen exchanger 6.